Reading from the N-terminus, the 272-residue chain is Protein UL24 homolog (272 aa).

Belongs to the herpesviridae UL24 family.

The protein resides in the virion. It localises to the host cytoplasm. The protein localises to the host nucleus. Its subcellular location is the host nucleolus. It is found in the host Golgi apparatus. In terms of biological role, may participate in nuclear egress of viral particles. Plays a role in the dispersal of several host nucleolar proteins including NCL/nucleolin and NPM1. Since deletion of host NCL/nucleolin negatively impact on nuclear egress, UL24 supposedly acts on this process through its effect on host nucleoli. In Equine herpesvirus 1 (strain V592) (EHV-1), this protein is Protein UL24 homolog.